We begin with the raw amino-acid sequence, 173 residues long: MTEYFEVGKILSPHGLKGEVKVNATTDFPEERLANGSRLFIKNSDQYQELIVDGARRHKQFYLVKFEEIDGIDQAEKVCGKELYVAETDQQELPEGSYYFKDILNCPVYDAETGEKLGVLANIETPGANDIWEIKPEHGKSFWIPNIESVVNKVDLANKRIEVTLLEGLRDEN.

The PRC barrel domain occupies 95 to 169 (EGSYYFKDIL…RIEVTLLEGL (75 aa)).

Belongs to the RimM family. Binds ribosomal protein uS19.

Its subcellular location is the cytoplasm. An accessory protein needed during the final step in the assembly of 30S ribosomal subunit, possibly for assembly of the head region. Essential for efficient processing of 16S rRNA. May be needed both before and after RbfA during the maturation of 16S rRNA. It has affinity for free ribosomal 30S subunits but not for 70S ribosomes. The sequence is that of Ribosome maturation factor RimM from Lactobacillus gasseri (strain ATCC 33323 / DSM 20243 / BCRC 14619 / CIP 102991 / JCM 1131 / KCTC 3163 / NCIMB 11718 / NCTC 13722 / AM63).